Consider the following 702-residue polypeptide: Methionine--tRNA ligase (702 aa).

Positions 23 to 33 match the 'HIGH' region motif; that stretch reads PYANGPLHLGH. Residues Cys154, Cys157, Cys167, and Cys170 each coordinate Zn(2+). A 'KMSKS' region motif is present at residues 341 to 345; the sequence is KMSKS. Lys344 is a binding site for ATP. The segment at 562-593 is disordered; sequence LAPPPASAKQQNASMSNTAPPPTAEEPETTAP. Positions 569–578 are enriched in polar residues; that stretch reads AKQQNASMSN. Residues 599–702 form the tRNA-binding domain; sequence DFAKLDLRIG…SSAQPGMPVR (104 aa).

The protein belongs to the class-I aminoacyl-tRNA synthetase family. MetG type 1 subfamily. As to quaternary structure, homodimer. Requires Zn(2+) as cofactor.

The protein resides in the cytoplasm. It carries out the reaction tRNA(Met) + L-methionine + ATP = L-methionyl-tRNA(Met) + AMP + diphosphate. Is required not only for elongation of protein synthesis but also for the initiation of all mRNA translation through initiator tRNA(fMet) aminoacylation. The protein is Methionine--tRNA ligase of Xylella fastidiosa (strain M23).